The following is a 216-amino-acid chain: DegV domain-containing protein UU190 (216 aa).

The 215-residue stretch at 1–215 (MLWKNLDELF…LNNFAILIEA (215 aa)) folds into the DegV domain. Residue S26 participates in hexadecanoate binding.

Its function is as follows. May bind long-chain fatty acids, such as palmitate, and may play a role in lipid transport or fatty acid metabolism. The chain is DegV domain-containing protein UU190 from Ureaplasma parvum serovar 3 (strain ATCC 700970).